A 143-amino-acid chain; its full sequence is Insertion element IS2 uncharacterized 16.4 kDa protein (143 aa).

The sequence is that of Insertion element IS2 uncharacterized 16.4 kDa protein from Escherichia coli.